The following is a 212-amino-acid chain: MFITFEGIEGCGKSTQIALLAASLQQAGQRVLLTREPGGCPIADQIRSVLLDAANTALVPMAELMLYAASRAQHLAEVVSPALAEGVIVLCDRFSDATRAYQSFGRGIDRQVIETLNSLACDGISPDLTVLLDCPVETGLGRARQRIDSTSGPREERFELESLAFHQRVRDGYLQLAAEEPGRFVIVDATVQPAQVASAISDAVLSRLAVPV.

An ATP-binding site is contributed by 7 to 14 (GIEGCGKS).

It belongs to the thymidylate kinase family.

The enzyme catalyses dTMP + ATP = dTDP + ADP. In terms of biological role, phosphorylation of dTMP to form dTDP in both de novo and salvage pathways of dTTP synthesis. The polypeptide is Thymidylate kinase (Trichlorobacter lovleyi (strain ATCC BAA-1151 / DSM 17278 / SZ) (Geobacter lovleyi)).